The chain runs to 122 residues: uncharacterized protein (122 aa).

The interval 97–122 is disordered; the sequence is TSRNGFSNPNKDGKKNDDDNNSSSKS.

This is an uncharacterized protein from Mycoplasma genitalium (strain ATCC 33530 / DSM 19775 / NCTC 10195 / G37) (Mycoplasmoides genitalium).